The primary structure comprises 151 residues: D-aminoacyl-tRNA deacylase (151 aa).

Positions 137-138 (GP) match the Gly-cisPro motif, important for rejection of L-amino acids motif.

Belongs to the DTD family. In terms of assembly, homodimer.

The protein localises to the cytoplasm. It carries out the reaction glycyl-tRNA(Ala) + H2O = tRNA(Ala) + glycine + H(+). The enzyme catalyses a D-aminoacyl-tRNA + H2O = a tRNA + a D-alpha-amino acid + H(+). In terms of biological role, an aminoacyl-tRNA editing enzyme that deacylates mischarged D-aminoacyl-tRNAs. Also deacylates mischarged glycyl-tRNA(Ala), protecting cells against glycine mischarging by AlaRS. Acts via tRNA-based rather than protein-based catalysis; rejects L-amino acids rather than detecting D-amino acids in the active site. By recycling D-aminoacyl-tRNA to D-amino acids and free tRNA molecules, this enzyme counteracts the toxicity associated with the formation of D-aminoacyl-tRNA entities in vivo and helps enforce protein L-homochirality. The protein is D-aminoacyl-tRNA deacylase of Fusobacterium nucleatum subsp. nucleatum (strain ATCC 25586 / DSM 15643 / BCRC 10681 / CIP 101130 / JCM 8532 / KCTC 2640 / LMG 13131 / VPI 4355).